Here is a 118-residue protein sequence, read N- to C-terminus: Small integral membrane protein 17 (118 aa).

Residues 1–84 (MQSLRPEQTR…DDESEGSQGF (84 aa)) form a disordered region. The span at 13 to 42 (LEPERTKTLLPRESRAWEKPPHPACTKDWE) shows a compositional bias: basic and acidic residues. The chain crosses the membrane as a helical span at residues 96–116 (IVLVVCVLFLFLVLTGMPMMF).

It localises to the membrane. This Homo sapiens (Human) protein is Small integral membrane protein 17 (SMIM17).